We begin with the raw amino-acid sequence, 340 residues long: Phenylalanine--tRNA ligase alpha subunit (340 aa).

Glu255 is a Mg(2+) binding site.

This sequence belongs to the class-II aminoacyl-tRNA synthetase family. Phe-tRNA synthetase alpha subunit type 1 subfamily. Tetramer of two alpha and two beta subunits. Mg(2+) is required as a cofactor.

It localises to the cytoplasm. The catalysed reaction is tRNA(Phe) + L-phenylalanine + ATP = L-phenylalanyl-tRNA(Phe) + AMP + diphosphate + H(+). The polypeptide is Phenylalanine--tRNA ligase alpha subunit (Desulfitobacterium hafniense (strain Y51)).